The sequence spans 341 residues: Fructose-1,6-bisphosphatase, cytosolic (341 aa).

Glu71, Glu100, Asp121, Leu123, and Asp124 together coordinate Mg(2+). Substrate contacts are provided by residues 124–127 (DGCS), Asn215, Tyr247, Tyr267, and Lys277. Glu283 lines the Mg(2+) pocket.

It belongs to the FBPase class 1 family. The cofactor is Mg(2+).

The protein resides in the cytoplasm. The catalysed reaction is beta-D-fructose 1,6-bisphosphate + H2O = beta-D-fructose 6-phosphate + phosphate. In Beta vulgaris (Sugar beet), this protein is Fructose-1,6-bisphosphatase, cytosolic.